Consider the following 268-residue polypeptide: Glutamate racemase (268 aa).

Residues 9–10 (DS) and 41–42 (YG) contribute to the substrate site. C73 functions as the Proton donor/acceptor in the catalytic mechanism. Position 74–75 (74–75 (NS)) interacts with substrate. The Proton donor/acceptor role is filled by C183. 184–185 (TH) provides a ligand contact to substrate.

Belongs to the aspartate/glutamate racemases family.

It carries out the reaction L-glutamate = D-glutamate. Its pathway is cell wall biogenesis; peptidoglycan biosynthesis. Its function is as follows. Provides the (R)-glutamate required for cell wall biosynthesis. The polypeptide is Glutamate racemase (Shewanella piezotolerans (strain WP3 / JCM 13877)).